Here is a 582-residue protein sequence, read N- to C-terminus: Formate--tetrahydrofolate ligase (582 aa).

Position 65-72 (65-72 (TPLGEGKT)) interacts with ATP.

The protein belongs to the formate--tetrahydrofolate ligase family.

It carries out the reaction (6S)-5,6,7,8-tetrahydrofolate + formate + ATP = (6R)-10-formyltetrahydrofolate + ADP + phosphate. It functions in the pathway one-carbon metabolism; tetrahydrofolate interconversion. The chain is Formate--tetrahydrofolate ligase from Vibrio parahaemolyticus serotype O3:K6 (strain RIMD 2210633).